Reading from the N-terminus, the 844-residue chain is Leucine--tRNA ligase (844 aa).

The 'HIGH' region motif lies at 39–49 (PYPSGRIHMGH). A 'KMSKS' region motif is present at residues 621 to 625 (KMSKS). An ATP-binding site is contributed by Lys624.

The protein belongs to the class-I aminoacyl-tRNA synthetase family.

It localises to the cytoplasm. It catalyses the reaction tRNA(Leu) + L-leucine + ATP = L-leucyl-tRNA(Leu) + AMP + diphosphate. The sequence is that of Leucine--tRNA ligase from Paracoccus denitrificans (strain Pd 1222).